A 213-amino-acid chain; its full sequence is Ras-related protein Rab-25 (213 aa).

GTP contacts are provided by Ser-21, Gly-24, Lys-25, Thr-26, Asn-27, Ser-38, His-39, Thr-43, and Thr-44. Thr-26 contacts Mg(2+). 2 consecutive short sequence motifs (switch) follow at residues 35-49 and 67-84; these read NEFS…GVEF and DTAG…YYRG. The Mg(2+) site is built by Thr-44 and Asp-67. Residues Gly-70, Asn-125, Lys-126, Asp-128, Ala-156, and Leu-157 each coordinate GTP. Residues Cys-209 and Cys-210 are each lipidated (S-geranylgeranyl cysteine). The residue at position 210 (Cys-210) is a Cysteine methyl ester. Residues 211-213 constitute a propeptide, removed in mature form; the sequence is INL.

The protein belongs to the small GTPase superfamily. Rab family. As to quaternary structure, interacts (GTP-bound form) with RAB11FIP1, RAB11FIP2, RAB11FIP3 and RAB11FIP4. Interacts (via the hypervariable C-terminal region) with ITGB1 (via the cytoplasmic region); the interaction is GTP-dependent. Interacts with ITGAV. Associates with the integrin alpha-V/beta-1 heterodimer. Interacts with VPS33B. Mg(2+) serves as cofactor. As to expression, expression is restricted to epithelial cells. Expressed in the gastrointestinal mucosa, (highest expression seen in the ileum and colon), kidney, and lung. A very minor and variable level of expression is seen in the splenic tissue.

The protein resides in the cell membrane. The protein localises to the cell projection. Its subcellular location is the pseudopodium membrane. It is found in the cytoplasmic vesicle. The enzyme catalyses GTP + H2O = GDP + phosphate + H(+). With respect to regulation, regulated by guanine nucleotide exchange factors (GEFs) which promote the exchange of bound GDP for free GTP. Regulated by GTPase activating proteins (GAPs) which increase the GTP hydrolysis activity. Inhibited by GDP dissociation inhibitors (GDIs) which prevent Rab-GDP dissociation. Its function is as follows. The small GTPases Rab are key regulators of intracellular membrane trafficking, from the formation of transport vesicles to their fusion with membranes. Rabs cycle between an inactive GDP-bound form and an active GTP-bound form that is able to recruit to membranes different set of downstream effectors directly responsible for vesicle formation, movement, tethering and fusion. RAB25 regulates epithelial cell differentiation, proliferation and survival, thereby playing key roles in tumorigenesis. Promotes invasive migration of cells in which it functions to localize and maintain integrin alpha-V/beta-1 at the tips of extending pseudopodia. Involved in the regulation of epithelial morphogenesis through the control of CLDN4 expression and localization at tight junctions. May selectively regulate the apical recycling pathway. Together with MYO5B regulates transcytosis. The protein is Ras-related protein Rab-25 (RAB25) of Oryctolagus cuniculus (Rabbit).